A 132-amino-acid chain; its full sequence is Small ribosomal subunit protein uS9 (132 aa).

It belongs to the universal ribosomal protein uS9 family.

This Mycoplasma genitalium (strain ATCC 33530 / DSM 19775 / NCTC 10195 / G37) (Mycoplasmoides genitalium) protein is Small ribosomal subunit protein uS9 (rpsI).